Reading from the N-terminus, the 104-residue chain is Growth-regulated protein homolog (104 aa).

The first 31 residues, 1–31 (MAPAATAAAPRLLRAALLLLLLVAAGRRAAG), serve as a signal peptide directing secretion. Disulfide bonds link Cys-40-Cys-66 and Cys-42-Cys-82.

This sequence belongs to the intercrine alpha (chemokine CxC) family.

It localises to the secreted. Plays a role in monocyte adhesion to the endothelium. The chain is Growth-regulated protein homolog from Oryctolagus cuniculus (Rabbit).